Consider the following 111-residue polypeptide: Putative ciliary rootlet coiled-coil protein-like 1 protein (111 aa).

Residues 21–86 (MELELSVTKL…RQAEQEATVA (66 aa)) adopt a coiled-coil conformation.

Belongs to the rootletin family.

This is Putative ciliary rootlet coiled-coil protein-like 1 protein (CROCCP2) from Homo sapiens (Human).